The following is a 695-amino-acid chain: Translation initiation factor IF-2 (695 aa).

A disordered region spans residues 60–92 (KKSASSKKKTEKEVEEEEIETPKKKKKQEEKIP). One can recognise a tr-type G domain in the interval 184-358 (QRPPVVTVMG…EMSEIKCIPT (175 aa)). The interval 193 to 200 (GHVDHGKT) is G1. 193-200 (GHVDHGKT) provides a ligand contact to GTP. Residues 218–222 (GITQS) form a G2 region. The segment at 239–242 (DTPG) is G3. Residues 239-243 (DTPGH) and 293-296 (NKID) each bind GTP. The interval 293-296 (NKID) is G4. The interval 330 to 332 (SAK) is G5.

The protein belongs to the TRAFAC class translation factor GTPase superfamily. Classic translation factor GTPase family. IF-2 subfamily.

It is found in the cytoplasm. One of the essential components for the initiation of protein synthesis. Protects formylmethionyl-tRNA from spontaneous hydrolysis and promotes its binding to the 30S ribosomal subunits. Also involved in the hydrolysis of GTP during the formation of the 70S ribosomal complex. This Kosmotoga olearia (strain ATCC BAA-1733 / DSM 21960 / TBF 19.5.1) protein is Translation initiation factor IF-2.